The following is a 141-amino-acid chain: ATP synthase epsilon chain (141 aa).

Belongs to the ATPase epsilon chain family. As to quaternary structure, F-type ATPases have 2 components, CF(1) - the catalytic core - and CF(0) - the membrane proton channel. CF(1) has five subunits: alpha(3), beta(3), gamma(1), delta(1), epsilon(1). CF(0) has three main subunits: a, b and c.

It is found in the cell inner membrane. In terms of biological role, produces ATP from ADP in the presence of a proton gradient across the membrane. This Burkholderia ambifaria (strain ATCC BAA-244 / DSM 16087 / CCUG 44356 / LMG 19182 / AMMD) (Burkholderia cepacia (strain AMMD)) protein is ATP synthase epsilon chain.